The following is a 366-amino-acid chain: Isocitrate dehydrogenase [NAD] subunit alpha, mitochondrial (366 aa).

The N-terminal 27 residues, 1–27, are a transit peptide targeting the mitochondrion; sequence MAGPAWISKVSRLLGAFHNQKQVTRGF. Residue K77 is modified to N6-succinyllysine. The residue at position 101 (T101) is a Phosphothreonine. 3 residues coordinate substrate: R115, R125, and R146. K223 is subject to N6-acetyllysine. Mg(2+) is bound by residues D233, D257, and D261. The residue at position 343 (K343) is an N6-acetyllysine; alternate. K343 is modified (N6-succinyllysine; alternate). Residue K350 is modified to N6-succinyllysine.

Belongs to the isocitrate and isopropylmalate dehydrogenases family. As to quaternary structure, heterooligomer of subunits alpha (IDH3A), beta (IDH3B), and gamma (IDH3G) in the apparent ratio of 2:1:1. The heterodimer containing one IDH3A and one IDH3B subunit and the heterodimer containing one IDH3A and one IDH3G subunit assemble into a heterotetramer (which contains two subunits of IDH3A, one of IDH3B and one of IDH3G) and further into the heterooctamer. The cofactor is Mg(2+). Mn(2+) is required as a cofactor.

The protein resides in the mitochondrion. The catalysed reaction is D-threo-isocitrate + NAD(+) = 2-oxoglutarate + CO2 + NADH. Its activity is regulated as follows. The heterotetramer and the heterodimer composed of IDH3A and IDH3G subunits can be allosterically activated by citrate (CIT) or/and ADP, and the two activators can act independently or synergistically. The heterodimer composed of IDH3A and IDH3B subunits cannot be allosterically regulated and the allosteric regulation of the heterotetramer is through the IDH3G subunit and not the IDH3B subunit. The IDH3G subunit contains the allosteric site which consists of a CIT-binding site and an ADP-binding site, and the binding of CIT and ADP causes conformational changes at the allosteric site which are transmitted to the active site in the catalytic subunit (IDH3A) through a cascade of conformational changes at the heterodimer interface, leading to stabilization of the isocitrate-binding at the active site and thus activation of the enzyme. ATP can activate the heterotetramer and the heterodimer composed of IDH3A and IDH3G subunits at low concentrations but inhibits their activities at high concentrations, whereas ATP exhibits only inhibitory effect on the heterodimer composed of IDH3A and IDH3B subunits. Functionally, catalytic subunit of the enzyme which catalyzes the decarboxylation of isocitrate (ICT) into alpha-ketoglutarate. The heterodimer composed of the alpha (IDH3A) and beta (IDH3B) subunits and the heterodimer composed of the alpha (IDH3A) and gamma (IDH3G) subunits, have considerable basal activity but the full activity of the heterotetramer (containing two subunits of IDH3A, one of IDH3B and one of IDH3G) requires the assembly and cooperative function of both heterodimers. In Sus scrofa (Pig), this protein is Isocitrate dehydrogenase [NAD] subunit alpha, mitochondrial (IDH3A).